The following is a 934-amino-acid chain: MPRRAASPTPSENEVDIAGALFNNDSDFEDNSSKHHTKKGAVTNSGLDLDFNDLLGNGDDGLPSFNGEGDDDEAFIASLTRSSQRKSSNIQGKSVKKGGGFQAMGLNAHLLRAITRKGFSVPTPIQRKAIPLILERKDVVGMARTGSGKTAAFVIPMIERLKGHSPRVGSRALIMSPSRELALQTLKVVKELGRGTDLKTVLLVGGDSLEEQFGMMASNPDIIIATPGRFLHLKVEMNLSLASIKYVVFDEADRLFEMGFATELTEILHALPPSRQTLLFSATLPSSLVEFARAGLQEPSLVRLDAETKVSPDLESAFFAVKGGEKEGALLHLLHDVIKVPLGPPEGTKEESDELQARKRKREYRPNPKEKPTEYSTIIFTATKHHVEYIANLLKLAGFAVSYVYGSLDQTARLIQVDNFRRGRTHILVVTDVAARGIDMPALANVINYDFPSQPKIFVHRVGRTARAGQRGWAYGLVRQSDVPYLLDLQLFLGRKLIIGHDQKNPSFAADVVVGTLKRDGVDVNIEWVEKALKESADLKALKGVAAKAEKLYMKTRNSASSQSAKRAREVTQSRGWTQLHPLFGEEAAEAQAARDDLLSRINRFKPQETIFELGPKGKSSRNKAAEVVRNMRSRFKERKTTNDEDDEDVDMEDAEGKPDGEETNAFEDFEDEEEEGEAEEAEEAEAKEDPYADDSDSEMEVTVSSSMHTKKKGGPVNFQDPEIFMSYTPRTTSLAEEKAYGVHSGGYSGNSFVEAARDATMDLTNDESAKNFGLPTKSKMRWDKRHSKYVAVANDEDGSKGAKMIRGESGVKIAASFKSGRFDRWRKDNRLGKLPTIGETEKSQLIRNFGAQPGQPRYKHKMEKAPKDADKFRDDYHVRKKRVAEAKEKRIGKYKDGEGSKRELKTATDIRKARAVAEKKREKNARPAKRQKR.

The tract at residues 21–43 (LFNNDSDFEDNSSKHHTKKGAVT) is disordered. The short motif at 99 to 127 (GGFQAMGLNAHLLRAITRKGFSVPTPIQR) is the Q motif element. In terms of domain architecture, Helicase ATP-binding spans 130–302 (IPLILERKDV…RAGLQEPSLV (173 aa)). ATP is bound at residue 143-150 (ARTGSGKT). The DEAD box motif lies at 250–253 (DEAD). Disordered stretches follow at residues 343 to 370 (GPPE…NPKE), 613 to 722 (ELGP…FQDP), and 851 to 934 (GAQP…RQKR). Positions 359–513 (KRKREYRPNP…KNPSFAADVV (155 aa)) constitute a Helicase C-terminal domain. Composition is skewed to acidic residues over residues 644–654 (DEDDEDVDMED) and 662–700 (EETN…DSEM). A compositionally biased stretch (basic and acidic residues) spans 864–926 (EKAPKDADKF…VAEKKREKNA (63 aa)).

The protein belongs to the DEAD box helicase family. DDX54/DBP10 subfamily.

It localises to the nucleus. It is found in the nucleolus. It catalyses the reaction ATP + H2O = ADP + phosphate + H(+). ATP-binding RNA helicase involved in the biogenesis of 60S ribosomal subunits and is required for the normal formation of 25S and 5.8S rRNAs. The protein is ATP-dependent RNA helicase dbp-10 (dbp-10) of Neurospora crassa (strain ATCC 24698 / 74-OR23-1A / CBS 708.71 / DSM 1257 / FGSC 987).